A 203-amino-acid chain; its full sequence is V-type ATP synthase subunit D (203 aa).

The protein belongs to the V-ATPase D subunit family.

Functionally, produces ATP from ADP in the presence of a proton gradient across the membrane. The chain is V-type ATP synthase subunit D (atpD) from Chlamydia muridarum (strain MoPn / Nigg).